The sequence spans 95 residues: Osteocalcin 1 (95 aa).

Positions 1–21 are cleaved as a signal peptide; the sequence is MKTLSVLVLCSLAVLCLTSDA. A propeptide spanning residues 22-50 is cleaved from the precursor; that stretch reads SFSSQPAVDTPAQEGLFVEQEQASSVVRQ. The region spanning 45 to 91 is the Gla domain; the sequence is SSVVRQAPKELSLSQLESLREVCELNLACEDMMDTSGIIAAYTTYYG. 3 residues coordinate Ca(2+): Glu-61, Glu-65, and Glu-68. 4-carboxyglutamate is present on residues Glu-61, Glu-65, and Glu-68. A disulfide bridge links Cys-67 with Cys-73.

This sequence belongs to the osteocalcin/matrix Gla protein family. Post-translationally, gamma-carboxyglutamate residues are formed by vitamin K dependent carboxylation by GGCX. These residues are essential for the binding of calcium.

The protein resides in the secreted. In terms of biological role, the carboxylated form is one of the main organic components of the bone matrix, which constitutes 1-2% of the total bone protein. The carboxylated form binds strongly to apatite and calcium. In Solea senegalensis (Senegalese sole), this protein is Osteocalcin 1.